A 264-amino-acid polypeptide reads, in one-letter code: Type III pantothenate kinase 2 (264 aa).

Residue 6–13 (DVGNTFTV) participates in ATP binding. Residues tyrosine 100 and 107 to 110 (GADR) each bind substrate. The active-site Proton acceptor is the aspartate 109. Aspartate 129 serves as a coordination point for K(+). Residue threonine 132 coordinates ATP. Position 184 (threonine 184) interacts with substrate.

It belongs to the type III pantothenate kinase family. As to quaternary structure, homodimer. The cofactor is NH4(+). Requires K(+) as cofactor.

The protein localises to the cytoplasm. The catalysed reaction is (R)-pantothenate + ATP = (R)-4'-phosphopantothenate + ADP + H(+). Its pathway is cofactor biosynthesis; coenzyme A biosynthesis; CoA from (R)-pantothenate: step 1/5. Catalyzes the phosphorylation of pantothenate (Pan), the first step in CoA biosynthesis. The sequence is that of Type III pantothenate kinase 2 from Symbiobacterium thermophilum (strain DSM 24528 / JCM 14929 / IAM 14863 / T).